Consider the following 436-residue polypeptide: tRNA(Ile)-lysidine synthase (436 aa).

21 to 26 (SGGVDS) is a binding site for ATP.

The protein belongs to the tRNA(Ile)-lysidine synthase family.

Its subcellular location is the cytoplasm. It catalyses the reaction cytidine(34) in tRNA(Ile2) + L-lysine + ATP = lysidine(34) in tRNA(Ile2) + AMP + diphosphate + H(+). Ligates lysine onto the cytidine present at position 34 of the AUA codon-specific tRNA(Ile) that contains the anticodon CAU, in an ATP-dependent manner. Cytidine is converted to lysidine, thus changing the amino acid specificity of the tRNA from methionine to isoleucine. The protein is tRNA(Ile)-lysidine synthase of Aster yellows witches'-broom phytoplasma (strain AYWB).